The chain runs to 144 residues: Deoxyuridine 5'-triphosphate nucleotidohydrolase (144 aa).

Residues 63 to 65 (RSG), N76, and 80 to 82 (TVD) contribute to the substrate site.

Belongs to the dUTPase family. Mg(2+) serves as cofactor.

It catalyses the reaction dUTP + H2O = dUMP + diphosphate + H(+). It functions in the pathway pyrimidine metabolism; dUMP biosynthesis; dUMP from dCTP (dUTP route): step 2/2. Its function is as follows. This enzyme is involved in nucleotide metabolism: it produces dUMP, the immediate precursor of thymidine nucleotides and it decreases the intracellular concentration of dUTP so that uracil cannot be incorporated into DNA. In Flavobacterium johnsoniae (strain ATCC 17061 / DSM 2064 / JCM 8514 / BCRC 14874 / CCUG 350202 / NBRC 14942 / NCIMB 11054 / UW101) (Cytophaga johnsonae), this protein is Deoxyuridine 5'-triphosphate nucleotidohydrolase.